We begin with the raw amino-acid sequence, 653 residues long: Threonine--tRNA ligase (653 aa).

One can recognise a TGS domain in the interval 1 to 61; it reads MIKITFPDGN…NEDAEVKLFK (61 aa). The interval 243 to 542 is catalytic; sequence DHRKIGKELE…LIEHTAGKFP (300 aa). Cys-338, His-389, and His-519 together coordinate Zn(2+).

The protein belongs to the class-II aminoacyl-tRNA synthetase family. As to quaternary structure, homodimer. Requires Zn(2+) as cofactor.

It localises to the cytoplasm. The enzyme catalyses tRNA(Thr) + L-threonine + ATP = L-threonyl-tRNA(Thr) + AMP + diphosphate + H(+). Its function is as follows. Catalyzes the attachment of threonine to tRNA(Thr) in a two-step reaction: L-threonine is first activated by ATP to form Thr-AMP and then transferred to the acceptor end of tRNA(Thr). Also edits incorrectly charged L-seryl-tRNA(Thr). This is Threonine--tRNA ligase from Porphyromonas gingivalis (strain ATCC BAA-308 / W83).